Consider the following 295-residue polypeptide: Protease HtpX (295 aa).

2 consecutive transmembrane segments (helical) span residues 4 to 24 (IVLF…ILSL) and 34 to 54 (GLMI…LLMS). Position 139 (His-139) interacts with Zn(2+). Glu-140 is an active-site residue. Residue His-143 coordinates Zn(2+). 2 helical membrane passes run 147–167 (GDMV…IFIS) and 194–214 (IVYM…ASII). Glu-223 lines the Zn(2+) pocket.

This sequence belongs to the peptidase M48B family. Zn(2+) serves as cofactor.

The protein localises to the cell inner membrane. In Photorhabdus laumondii subsp. laumondii (strain DSM 15139 / CIP 105565 / TT01) (Photorhabdus luminescens subsp. laumondii), this protein is Protease HtpX.